We begin with the raw amino-acid sequence, 246 residues long: 1-(5-phosphoribosyl)-5-[(5-phosphoribosylamino)methylideneamino] imidazole-4-carboxamide isomerase (246 aa).

Catalysis depends on Asp-8, which acts as the Proton acceptor. Asp-131 functions as the Proton donor in the catalytic mechanism.

Belongs to the HisA/HisF family.

Its subcellular location is the cytoplasm. The catalysed reaction is 1-(5-phospho-beta-D-ribosyl)-5-[(5-phospho-beta-D-ribosylamino)methylideneamino]imidazole-4-carboxamide = 5-[(5-phospho-1-deoxy-D-ribulos-1-ylimino)methylamino]-1-(5-phospho-beta-D-ribosyl)imidazole-4-carboxamide. It functions in the pathway amino-acid biosynthesis; L-histidine biosynthesis; L-histidine from 5-phospho-alpha-D-ribose 1-diphosphate: step 4/9. The sequence is that of 1-(5-phosphoribosyl)-5-[(5-phosphoribosylamino)methylideneamino] imidazole-4-carboxamide isomerase from Polaromonas naphthalenivorans (strain CJ2).